A 445-amino-acid chain; its full sequence is UPF0210 protein SP_0239 (445 aa).

The protein belongs to the UPF0210 family. In terms of assembly, homodimer.

The protein is UPF0210 protein SP_0239 of Streptococcus pneumoniae serotype 4 (strain ATCC BAA-334 / TIGR4).